Here is a 496-residue protein sequence, read N- to C-terminus: Lysine--tRNA ligase (496 aa).

Residues Glu408 and Glu415 each coordinate Mg(2+).

This sequence belongs to the class-II aminoacyl-tRNA synthetase family. In terms of assembly, homodimer. The cofactor is Mg(2+).

Its subcellular location is the cytoplasm. It catalyses the reaction tRNA(Lys) + L-lysine + ATP = L-lysyl-tRNA(Lys) + AMP + diphosphate. The polypeptide is Lysine--tRNA ligase (Legionella pneumophila (strain Paris)).